A 1638-amino-acid chain; its full sequence is DNA polymerase III PolC-type (1638 aa).

Residues 193–212 are disordered; the sequence is SEIKKQRSEERESKNTREAK. Residues 194–212 are compositionally biased toward basic and acidic residues; sequence EIKKQRSEERESKNTREAK. The Exonuclease domain maps to 596–752; that stretch reads YVVFDVETTG…FDAEATGRLL (157 aa).

The protein belongs to the DNA polymerase type-C family. PolC subfamily.

The protein resides in the cytoplasm. The catalysed reaction is DNA(n) + a 2'-deoxyribonucleoside 5'-triphosphate = DNA(n+1) + diphosphate. Its function is as follows. Required for replicative DNA synthesis. This DNA polymerase also exhibits 3' to 5' exonuclease activity. This is DNA polymerase III PolC-type from Lactococcus lactis subsp. lactis (strain IL1403) (Streptococcus lactis).